A 297-amino-acid polypeptide reads, in one-letter code: Formamidopyrimidine-DNA glycosylase (297 aa).

Residue proline 2 is the Schiff-base intermediate with DNA of the active site. Catalysis depends on glutamate 3, which acts as the Proton donor. Lysine 58 serves as the catalytic Proton donor; for beta-elimination activity. Residues histidine 104, arginine 127, and lysine 170 each coordinate DNA. The FPG-type zinc finger occupies 261–297 (NVYDREGEACRTPGCTGTVERMTQAGRSTFHCPQCQR). Residue arginine 287 is the Proton donor; for delta-elimination activity of the active site.

It belongs to the FPG family. Monomer. Zn(2+) serves as cofactor.

It carries out the reaction Hydrolysis of DNA containing ring-opened 7-methylguanine residues, releasing 2,6-diamino-4-hydroxy-5-(N-methyl)formamidopyrimidine.. It catalyses the reaction 2'-deoxyribonucleotide-(2'-deoxyribose 5'-phosphate)-2'-deoxyribonucleotide-DNA = a 3'-end 2'-deoxyribonucleotide-(2,3-dehydro-2,3-deoxyribose 5'-phosphate)-DNA + a 5'-end 5'-phospho-2'-deoxyribonucleoside-DNA + H(+). In terms of biological role, involved in base excision repair of DNA damaged by oxidation or by mutagenic agents. Acts as a DNA glycosylase that recognizes and removes damaged bases. Has a preference for oxidized purines, such as 7,8-dihydro-8-oxoguanine (8-oxoG). Has AP (apurinic/apyrimidinic) lyase activity and introduces nicks in the DNA strand. Cleaves the DNA backbone by beta-delta elimination to generate a single-strand break at the site of the removed base with both 3'- and 5'-phosphates. This is Formamidopyrimidine-DNA glycosylase from Allorhizobium ampelinum (strain ATCC BAA-846 / DSM 112012 / S4) (Agrobacterium vitis (strain S4)).